We begin with the raw amino-acid sequence, 144 residues long: MRNTGAGPSPSVSRPPPSAAPLSGAALAAPGDAPSALYAPSALVLTVGKGVSATTAAPERAVTLTCAPGPSGTHPAAGSACADLAAVGGDLNALTRGEDVMCPMVYDPVLLTVDGVWQGKRVSYERVFSNECEMNAHGSSVFAF.

Residues 1–12 (MRNTGAGPSPSV) are compositionally biased toward low complexity. The disordered stretch occupies residues 1 to 25 (MRNTGAGPSPSVSRPPPSAAPLSGA). The signal sequence occupies residues 1–31 (MRNTGAGPSPSVSRPPPSAAPLSGAALAAPG). 2 consecutive repeats follow at residues 33 to 37 (APSAL) and 39 to 43 (APSAL). Disulfide bonds link cysteine 66–cysteine 81 and cysteine 102–cysteine 132.

This sequence belongs to the protease inhibitor I16 (SSI) family. In terms of assembly, homodimer.

The protein resides in the secreted. Its function is as follows. Strong inhibitor of bacterial serine proteases such as subtilisin. The polypeptide is Subtilisin inhibitor (ssi) (Streptomyces albogriseolus).